An 865-amino-acid chain; its full sequence is Xylosyltransferase 2 (865 aa).

Topologically, residues 1-15 (MVASARVQKLVRRYK) are cytoplasmic. A helical; Signal-anchor for type II membrane protein transmembrane segment spans residues 16 to 36 (LAIATALAILLLQGLVVWSFS). The Lumenal portion of the chain corresponds to 37-865 (GLEEDEPGEK…GPVKADGRLR (829 aa)). A disordered region spans residues 39 to 155 (EEDEPGEKGR…SVEGAPQPTD (117 aa)). A compositionally biased stretch (basic and acidic residues) spans 53-65 (RPLDPGEGSKDTD). Positions 73 to 82 (SAGRRHGRWR) are enriched in basic residues. Asn122 carries an N-linked (GlcNAc...) asparagine glycan. Cystine bridges form between Cys162/Cys190, Cys206/Cys448, Cys467/Cys480, and Cys469/Cys478. Residues Val239, Asp267, and 296–298 (TIW) contribute to the UDP-alpha-D-xylose site. N-linked (GlcNAc...) asparagine glycosylation is present at Asn327. A UDP-alpha-D-xylose-binding site is contributed by 400 to 401 (DW). UDP-alpha-D-xylose-binding positions include Ser481 and 504-505 (RK). 2 cysteine pairs are disulfide-bonded: Cys581–Cys833 and Cys826–Cys839. Asn683 carries N-linked (GlcNAc...) asparagine glycosylation.

Belongs to the glycosyltransferase 14 family. XylT subfamily. As to quaternary structure, monomer. Mg(2+) serves as cofactor. The cofactor is Mn(2+). Post-translationally, contains disulfide bonds. Detected in brain, liver, lung, kidney, heart, spleen and testis, and at lower levels in skeletal muscle.

The protein localises to the golgi apparatus membrane. Its subcellular location is the secreted. It catalyses the reaction UDP-alpha-D-xylose + L-seryl-[protein] = 3-O-(beta-D-xylosyl)-L-seryl-[protein] + UDP + H(+). Its pathway is glycan metabolism; chondroitin sulfate biosynthesis. It participates in glycan metabolism; heparan sulfate biosynthesis. Functionally, catalyzes the first step in the biosynthesis of chondroitin sulfate, heparan sulfate and dermatan sulfate proteoglycans, such as DCN. Transfers D-xylose from UDP-D-xylose to specific serine residues of the core protein. This chain is Xylosyltransferase 2 (Xylt2), found in Mus musculus (Mouse).